The sequence spans 928 residues: DNA ligase 4 (928 aa).

The ATP site is built by E302, K304, R309, E362, F409, E469, K474, K492, and K494. K304 serves as the catalytic N6-AMP-lysine intermediate. Residue E362 coordinates Mg(2+). Residue E469 participates in Mg(2+) binding. BRCT domains follow at residues 673 to 769 (VESD…PYFI) and 821 to 927 (PWIY…DYKF).

The protein belongs to the ATP-dependent DNA ligase family. Mg(2+) serves as cofactor.

The protein localises to the nucleus. The enzyme catalyses ATP + (deoxyribonucleotide)n-3'-hydroxyl + 5'-phospho-(deoxyribonucleotide)m = (deoxyribonucleotide)n+m + AMP + diphosphate.. Functionally, DNA ligase involved in DNA non-homologous end joining (NHEJ); required for double-strand break (DSB) repair. Not required for the repair of DSBs induced by ionizing radiation or UV light. Has an important role in morphogenesis, positively affecting the capacity to form hyphae. The polypeptide is DNA ligase 4 (LIG4) (Candida albicans (strain SC5314 / ATCC MYA-2876) (Yeast)).